The chain runs to 109 residues: Large ribosomal subunit protein uL22 (109 aa).

Belongs to the universal ribosomal protein uL22 family. In terms of assembly, part of the 50S ribosomal subunit.

Functionally, this protein binds specifically to 23S rRNA; its binding is stimulated by other ribosomal proteins, e.g. L4, L17, and L20. It is important during the early stages of 50S assembly. It makes multiple contacts with different domains of the 23S rRNA in the assembled 50S subunit and ribosome. The globular domain of the protein is located near the polypeptide exit tunnel on the outside of the subunit, while an extended beta-hairpin is found that lines the wall of the exit tunnel in the center of the 70S ribosome. This chain is Large ribosomal subunit protein uL22, found in Cupriavidus necator (strain ATCC 17699 / DSM 428 / KCTC 22496 / NCIMB 10442 / H16 / Stanier 337) (Ralstonia eutropha).